The sequence spans 131 residues: Protein Turandot M (131 aa).

The first 23 residues, 1 to 23 (MNPAIYLSCLVVFSLLLLGKVNA), serve as a signal peptide directing secretion.

It belongs to the Turandot family.

The protein resides in the secreted. In terms of biological role, a humoral factor that may play a role in stress tolerance. Requires Mekk1 expression in the fat body to regulate response to septic injury and consequent immune response. The sequence is that of Protein Turandot M from Drosophila erecta (Fruit fly).